Here is a 328-residue protein sequence, read N- to C-terminus: UPF0194 membrane protein YPTS_1292 (328 aa).

An N-terminal signal peptide occupies residues 1 to 22 (MNRKKIIVAAVIVALLATLAYG). Coiled coils occupy residues 80-109 (YLNALKQAQANVQSAQAQLALLKAGYREEE) and 142-209 (AVSA…ILLA).

The protein belongs to the UPF0194 family.

It is found in the periplasm. This Yersinia pseudotuberculosis serotype IB (strain PB1/+) protein is UPF0194 membrane protein YPTS_1292.